The primary structure comprises 117 residues: Ribonuclease P protein component (117 aa).

The protein belongs to the RnpA family. Consists of a catalytic RNA component (M1 or rnpB) and a protein subunit.

It carries out the reaction Endonucleolytic cleavage of RNA, removing 5'-extranucleotides from tRNA precursor.. Functionally, RNaseP catalyzes the removal of the 5'-leader sequence from pre-tRNA to produce the mature 5'-terminus. It can also cleave other RNA substrates such as 4.5S RNA. The protein component plays an auxiliary but essential role in vivo by binding to the 5'-leader sequence and broadening the substrate specificity of the ribozyme. This chain is Ribonuclease P protein component, found in Limosilactobacillus reuteri subsp. reuteri (strain JCM 1112) (Lactobacillus reuteri).